We begin with the raw amino-acid sequence, 131 residues long: uncharacterized protein (131 aa).

An HTH hxlR-type domain is found at cysteine 26–glutamate 124.

This is an uncharacterized protein from Methanothermobacter thermautotrophicus (strain ATCC 29096 / DSM 1053 / JCM 10044 / NBRC 100330 / Delta H) (Methanobacterium thermoautotrophicum).